The chain runs to 443 residues: Zinc finger protein ZIC 1 (443 aa).

The segment at 221-256 (LICKWIEPEQLANPKKSCNKTFSTMHELVTHVTVEH) adopts a C2H2-type 1; atypical zinc-finger fold. Residues 265 to 292 (HICVWEECPREGKPFKAKYKLINHIRVH) form a C2H2-type 2; atypical zinc finger. 3 consecutive C2H2-type zinc fingers follow at residues 298 to 322 (FPCP…KRTH), 328 to 352 (FKCE…MHVH), and 358 to 380 (YLCK…MKVH). The segment at 371–433 (SSLRKHMKVH…AVHHTSNHST (63 aa)) is disordered. Residues 383–396 (SSQGSQPSPAASSG) are compositionally biased toward low complexity. Polar residues predominate over residues 397 to 413 (YESSTPPTIVSPSAENQ). Positions 408–443 (PSAENQSTSSLSPSSSAVHHTSNHSTLSSNFNEWYV) are negatively regulates transcriptional activity. Residues 414-433 (STSSLSPSSSAVHHTSNHST) are compositionally biased toward low complexity.

This sequence belongs to the GLI C2H2-type zinc-finger protein family. During early gastrula stages, widely expressed in the dorsal ectoderm. At mid-gastrula, expressed throughout the presumptive neural plate and at late gastrula, expression gradually diminishes in the dorsal midline and increases in the anterior folds. By early neurula stage, expression becomes restricted to the lateral edges of the neural plate, corresponding to the presumptive dorsal neural plate and neural crest, and in flanking ectoderm. In early tailbud stages (stages 22-23), expressed in the dorsal forebrain, midbrain and hindbrain. Subsequently expressed in the telencephalon and at the diencephalon/mesencephalon boundary. In the spinal cord, expression is restricted to the dorsal most region including the roof plate. Also expressed in the somites but not in eye vesicles. At larval stages, expressed mainly in the dorsal neural tube throughout its anteroposterior axis.

The protein localises to the nucleus. Its subcellular location is the cytoplasm. Its function is as follows. Transcriptional activator that induces expression of multiple genes including pax3, en2, snai2/slug, feb and a subset of wnt genes. Has multiple key roles in the regulation of neural induction and neurogenesis: acts as a neural competence factor, sensitizing the presumptive neuroectoderm to respond to subsequent neuralizing signals. Promotes both preplacodal cell fates and neural crest cell fates, two of the cell populations that arise from the neural plate border. Cooperates with pax3 in concert with wnt signaling to determine neural crest fate. Synergizes with the bmp-inhibitor noggin/nog and acts through the wnt pathway to induce expression of en2. May bind to the minimal GLI-consensus sequence 5'-TGGGTGGTC-3'. The chain is Zinc finger protein ZIC 1 (zic1) from Xenopus laevis (African clawed frog).